The sequence spans 184 residues: Prolyl-tRNA synthetase associated domain-containing protein 1 (184 aa).

This sequence belongs to the PRORSD1 family.

This chain is Prolyl-tRNA synthetase associated domain-containing protein 1 (Prorsd1), found in Danio rerio (Zebrafish).